The following is a 427-amino-acid chain: MTVSFEKTSDTKGTLSFSIDQETIKTGLDKAFNKVKANISVPGFRKGKISRQMFNKMYGEEALFEEALNAVLPTAYDAAVKEAAIEPVAQPKIDVAKMEKGSDWELTAEVVVKPTITLGDYKDLTVEVDATKEVTDEEVETRLTNAQNNLAELVVKETAAENGDTVVIDFVGSVDGVEFEGGKGSNHSLELGSGQFIPGFEEQLVGTKSGETVEVKVTFPENYQAEDLAGKEALFVTTVNEVKAKELPELDDELAKDIDEEVETLEELKAKFRKELEESKSEAYDDAVETAAIEAAVANAEIKEIPEEMIHEEVHRAMNEFLGGMQQQGISPEMYFQITGTSEDDLHKQYEADADKRVRTNLVIEAIAAAESFTTSDEEVKAEIEDLAGQYNMPVEQVEKLLPVDMLKHDIAMKKAVEVIATTAKVK.

Positions 163–248 (GDTVVIDFVG…VNEVKAKELP (86 aa)) constitute a PPIase FKBP-type domain.

The protein belongs to the FKBP-type PPIase family. Tig subfamily.

It localises to the cytoplasm. It carries out the reaction [protein]-peptidylproline (omega=180) = [protein]-peptidylproline (omega=0). In terms of biological role, involved in protein export. Acts as a chaperone by maintaining the newly synthesized protein in an open conformation. Functions as a peptidyl-prolyl cis-trans isomerase. This Lactococcus lactis subsp. cremoris (strain SK11) protein is Trigger factor.